Reading from the N-terminus, the 1063-residue chain is E3 ubiquitin-protein ligase PDZRN3 (1063 aa).

The segment at 18-56 adopts an RING-type; degenerate zinc-finger fold; the sequence is CALCHKVLEDPLTTPCGHVFCAGCVLPWVVQEGSCPARC. The TRAF-type zinc finger occupies 100–158; the sequence is EHLERCDFAPARCRHAGCGQLLLRRDVEAHMRDACDARPVGRCQEGCGLPLTHGEQRAG. 2 consecutive PDZ domains span residues 249 to 339 and 419 to 503; these read TLVL…LRRT and EVGL…IARP. Phosphoserine is present on S427. The tract at residues 545–602 is disordered; sequence QKKHEEDGGTTDTATILSNQHEKDSGVGRTDESTRNDESSEQENNGEDATASANPLAG. The span at 554–563 shows a compositional bias: polar residues; the sequence is TTDTATILSN. The segment covering 564 to 582 has biased composition (basic and acidic residues); the sequence is QHEKDSGVGRTDESTRNDE. Positions 680–705 form a coiled coil; that stretch reads ESVDKELELLNEELRSIELECLSIVR. Residues 746-755 are compositionally biased toward basic and acidic residues; the sequence is ELPEKSDKDS. 2 disordered regions span residues 746-798 and 834-853; these read ELPE…IEAY and IKERRGSDGSRSPTASPKLG. Polar residues predominate over residues 756–770; the sequence is SSAYNTGESCRSTPL.

In terms of assembly, interacts with NLGN1 and EFNB2. Interacts with UBE2D2 and with MUSK via the first PDZ domain. In myotubes, the interaction between PDZRN3 and MUSK is enhanced upon agrin stimulation. Auto-ubiquitinated. As to expression, highly expressed in skeletal and cardiac muscle and at lower levels in spinal cord and brain (at protein level). Also expressed in kidney and lung. In muscles, concentrated at the neuromuscular junction (NMJ).

It is found in the synapse. Its subcellular location is the cytoplasm. The catalysed reaction is S-ubiquitinyl-[E2 ubiquitin-conjugating enzyme]-L-cysteine + [acceptor protein]-L-lysine = [E2 ubiquitin-conjugating enzyme]-L-cysteine + N(6)-ubiquitinyl-[acceptor protein]-L-lysine.. Its pathway is protein modification; protein ubiquitination. Functionally, E3 ubiquitin-protein ligase. Plays an important role in regulating the surface level of MUSK on myotubes. Mediates the ubiquitination of MUSK, promoting its endocytosis and lysosomal degradation. Might contribute to terminal myogenic differentiation. The sequence is that of E3 ubiquitin-protein ligase PDZRN3 (Pdzrn3) from Mus musculus (Mouse).